Reading from the N-terminus, the 97-residue chain is HssA/B-like protein 32 (97 aa).

2 disordered regions span residues 1-23 (MTLF…SLAS) and 62-97 (AKSS…GSCS). A compositionally biased stretch (gly residues) spans 62 to 74 (AKSSGGSCGGKGG). Positions 75–88 (SHNHGHGHGPHGHG) are enriched in basic residues.

This sequence belongs to the hssA/B family.

This is HssA/B-like protein 32 (hssl32) from Dictyostelium discoideum (Social amoeba).